Here is a 277-residue protein sequence, read N- to C-terminus: Carbonyl reductase [NADPH] 3 (277 aa).

Position 2 is an N-acetylserine (S2). NADP(+)-binding positions include V10–V34, R38–R42, D63–I64, and N90. Phosphoserine is present on S30. S140 lines the substrate pocket. Residue Y194 is the Proton acceptor of the active site. NADP(+) is bound by residues Y194–K198 and D239.

The protein belongs to the short-chain dehydrogenases/reductases (SDR) family. In terms of tissue distribution, detected in ovary, pancreas, intestine, colon, kidney, brain, thymus, lung, heart, liver, spleen, leukocyte, prostate and testis.

It localises to the cytoplasm. It catalyses the reaction a secondary alcohol + NADP(+) = a ketone + NADPH + H(+). The enzyme catalyses a quinone + NADPH + H(+) = a quinol + NADP(+). Its function is as follows. Catalyzes the NADPH-dependent reduction of carbonyl compounds to their corresponding alcohols. Has low NADPH-dependent oxidoreductase activity. Acts on several orthoquinones, acts as well on non-quinone compounds, such as isatin or on the anticancer drug oracin. Best substrates for CBR3 is 1,2- naphthoquinone, hence could play a role in protection against cytotoxicity of exogenous quinones. Exerts activity toward ortho-quinones but not paraquinones. No endogenous substrate for CBR3 except isatin has been identified. This is Carbonyl reductase [NADPH] 3 from Homo sapiens (Human).